The primary structure comprises 154 residues: Ribonuclease H (154 aa).

Positions 1–142 (MRKQVEIFTD…CDELARAAAS (142 aa)) constitute an RNase H type-1 domain. 4 residues coordinate Mg(2+): aspartate 10, glutamate 48, aspartate 70, and aspartate 134.

This sequence belongs to the RNase H family. Monomer. Mg(2+) serves as cofactor.

It is found in the cytoplasm. The enzyme catalyses Endonucleolytic cleavage to 5'-phosphomonoester.. Endonuclease that specifically degrades the RNA of RNA-DNA hybrids. This is Ribonuclease H from Pectobacterium atrosepticum (strain SCRI 1043 / ATCC BAA-672) (Erwinia carotovora subsp. atroseptica).